Reading from the N-terminus, the 364-residue chain is Mannose-1-phosphate guanyltransferase (364 aa).

Belongs to the transferase hexapeptide repeat family.

The protein localises to the cytoplasm. It catalyses the reaction alpha-D-mannose 1-phosphate + GTP + H(+) = GDP-alpha-D-mannose + diphosphate. The protein operates within nucleotide-sugar biosynthesis; GDP-alpha-D-mannose biosynthesis; GDP-alpha-D-mannose from alpha-D-mannose 1-phosphate (GTP route): step 1/1. Functionally, involved in cell wall synthesis where it is required for glycosylation. Involved in cell cycle progression through cell-size checkpoint. The sequence is that of Mannose-1-phosphate guanyltransferase (mpg-1) from Neurospora crassa (strain ATCC 24698 / 74-OR23-1A / CBS 708.71 / DSM 1257 / FGSC 987).